The primary structure comprises 1037 residues: Multidrug resistance protein MdtF (1037 aa).

Residues 1 to 9 (MANYFIDRP) lie on the Cytoplasmic side of the membrane. Residues 10–30 (VFAWVLAIIMMLAGGLAIMNL) traverse the membrane as a helical segment. Over 31–338 (PVAQYPQIAP…TTPFIEISIQ (308 aa)) the chain is Periplasmic. Residues 339 to 359 (EVFKTLVEAIILVFLVMYLFL) traverse the membrane as a helical segment. Residues 360-369 (QNFRATIIPT) lie on the Cytoplasmic side of the membrane. The helical transmembrane segment at 370–390 (IAVPVVILGTFAILSAVGFTI) threads the bilayer. At 391 to 392 (NT) the chain is on the periplasmic side. The helical transmembrane segment at 393-413 (LTMFGMVLAIGLLVDDAIVVV) threads the bilayer. Topologically, residues 414–441 (ENVERVIAEDKLPPKEATHKSMGQIQRA) are cytoplasmic. The helical transmembrane segment at 442-462 (LVGIAVVLSAVFMPMAFMSGA) threads the bilayer. Over 463–471 (TGEIYRQFS) the chain is Periplasmic. Residues 472–492 (ITLISSMLLSVFVAMSLTPAL) form a helical membrane-spanning segment. At 493-534 (CATILKAAPEGGHKPNALFARFNTLFEKSTQHYTDSTRSLLR) the chain is on the cytoplasmic side. The helical transmembrane segment at 535–555 (CTGRYMVIYLLICAGMAVLFL) threads the bilayer. Over 556–870 (RTPTSFLPEE…SYQEALSSNQ (315 aa)) the chain is Periplasmic. A helical membrane pass occupies residues 871–891 (APALYAISLVVVFLALAALYE). Residue serine 892 is a topological domain, cytoplasmic. Residues 893–913 (WSIPFSVMLVVPLGVVGALLA) traverse the membrane as a helical segment. The Periplasmic segment spans residues 914-927 (TDLRGLSNDVYFQV). A helical membrane pass occupies residues 928–948 (GLLTTIGLSAKNAILIVEFAV). Topologically, residues 949–972 (EMMQKEGKTPIEAIIEAARMRLRP) are cytoplasmic. Residues 973-993 (ILMTSLAFILGVLPLVISHGA) form a helical membrane-spanning segment. Topologically, residues 994–1006 (GSGAQNAVGTGVM) are periplasmic. Residues 1007–1027 (GGMFAATVLAIYFVPVFFVVV) traverse the membrane as a helical segment. Residues 1028 to 1037 (EHLFARFKKA) lie on the Cytoplasmic side of the membrane.

This sequence belongs to the resistance-nodulation-cell division (RND) (TC 2.A.6) family. In terms of assembly, homotrimer. Part of the tripartite efflux system MdtEF-TolC, which is composed of an inner membrane transporter, MdtF, a membrane fusion protein, MdtE, and an outer membrane component, TolC. The complex forms a large protein conduit and can translocate molecules across both the inner and outer membranes.

The protein resides in the cell inner membrane. Part of the tripartite efflux system MdtEF-TolC, which confers resistance to various compounds. The chain is Multidrug resistance protein MdtF (mdtF) from Escherichia coli O157:H7.